Here is a 28-residue protein sequence, read N- to C-terminus: U-actitoxin-Ate1 (28 aa).

A signal peptide spans Met-1–Ser-15. Cys-20 and Cys-26 are disulfide-bonded.

In terms of assembly, monomer in solution. May be N-glycosylated at Asn-22. Activity with this modification has not be tested. As to expression, highly expressed in the tentacles. Weakly expressed in acrorhagi and mesenteric filaments.

The protein resides in the secreted. It localises to the nematocyst. Functionally, probable toxin expected to be employed in prey capture and/or defense against predators (based on its abundance in tentacles). Has only a weak affinity for lipid membranes. Shows moderate cytotoxic activity against breast cancer cell lines (MCF-7 and MDA-MB-231). This Actinia tenebrosa (Australian red waratah sea anemone) protein is U-actitoxin-Ate1.